The chain runs to 519 residues: MTSTFNPRECKLSKQEGQNYGFFLRIEKDTEGHLVRVVEKCSPAEKAGLQDGDRVLRINGVFVDKEEHMQVVDLVRKSGNSVTLLVLDGDSYEKAVKTRVDLKELGQSQKEQGLSDNILSPVMNGGVQTWTQPRLCYLVKEGGSYGFSLKTVQGKKGVYMTDITPQGVAMRAGVLADDHLIEVNGENVEDASHEEVVEKVKKSGSRVMFLLVDKETDKRHVEQKIQFKRETASLKLLPHQPRIVEMKKGSNGYGFYLRAGSEQKGQIIKDIDSGSPAEEAGLKNNDLVVAVNGESVETLDHDSVVEMIRKGGDQTSLLVVDKETDNMYRLAHFSPFLYYQSQELPNGSVKEAPAPTPTSLEVSSPPDTTEEVDHKPKLCRLAKGENGYGFHLNAIRGLPGSFIKEVQKGGPADLAGLEDEDVIIEVNGVNVLDEPYEKVVDRIQSSGKNVTLLVCGKKAYDYFQAKKIPIVSSLADPLDTPPDSKEGIVVESNHDSHMAKERAHSTASHSSSNSEDTEM.

One can recognise a PDZ 1 domain in the interval 9–90; the sequence is ECKLSKQEGQ…SVTLLVLDGD (82 aa). A phosphoserine mark is found at Ser-108, Ser-148, Ser-192, Ser-250, Ser-334, and Ser-348. PDZ domains follow at residues 134–215 and 243–323; these read RLCY…VDKE and IVEM…VDKE. The interval 347–374 is disordered; it reads GSVKEAPAPTPTSLEVSSPPDTTEEVDH. Residues 357–367 are compositionally biased toward polar residues; sequence PTSLEVSSPPD. One can recognise a PDZ 4 domain in the interval 378 to 458; that stretch reads LCRLAKGENG…NVTLLVCGKK (81 aa). Thr-451 is modified (phosphothreonine). A disordered region spans residues 479-519; the sequence is DTPPDSKEGIVVESNHDSHMAKERAHSTASHSSSNSEDTEM. The segment covering 482 to 504 has biased composition (basic and acidic residues); sequence PDSKEGIVVESNHDSHMAKERAH. Residues Ser-492, Ser-508, Ser-510, Ser-511, Ser-512, and Ser-514 each carry the phosphoserine modification. The segment covering 505-519 has biased composition (low complexity); that stretch reads STASHSSSNSEDTEM.

This sequence belongs to the NHER family. As to quaternary structure, interacts with PDZK1IP1 and ABCC2. Interacts (via PDZ domains 1 and 3) with SCARB1 (C-terminal domain). Forms a heterodimeric complex with NHERF1. Interacts with AKAP2, BCR, CFTR, SLC22A12, SLC22A4, SLC22A5, NHERF2 and SLC17A1. Component of a complex, composed of PDZK1, SYNGAP1, KLHL17 and NMDA receptors. Interacts (via PDZ1 domain) directly with KLHL17; the interaction is important for integrity of actin cytoskeleton structures in neurons. Interacts (via the first PDZ domain) with PTGIR (via non-isoprenylated C-terminus). Interacts (via C-terminal PDZ domain) with SLC26A6 (via C-terminal domain). Interacts (via C-terminal PDZ domain) with SLC9A3 (via C-terminal domain). Interacts (via PDZ domains 1 and 3) with SLC5A8 (via PDZ-binding motif); interaction increases nicotinate transport activity of SLC5A8. Expression is limited to epithelial cells. Expressed in the kidney (brush border of proximal tubule), pancreas, liver, and small intestine. Expressed at a lower level in the adrenal cortex, testis and stomach. Overexpressed in breast, renal and lung carcinomas.

Its subcellular location is the membrane. It localises to the cell membrane. A scaffold protein that connects plasma membrane proteins and regulatory components, regulating their surface expression in epithelial cells apical domains. May be involved in the coordination of a diverse range of regulatory processes for ion transport and second messenger cascades. In complex with NHERF1, may cluster proteins that are functionally dependent in a mutual fashion and modulate the trafficking and the activity of the associated membrane proteins. May play a role in the cellular mechanisms associated with multidrug resistance through its interaction with ABCC2 and PDZK1IP1. May potentiate the CFTR chloride channel activity. Required for normal cell-surface expression of SCARB1. Plays a role in maintaining normal plasma cholesterol levels via its effects on SCARB1. Plays a role in the normal localization and function of the chloride-anion exchanger SLC26A6 to the plasma membrane in the brush border of the proximal tubule of the kidney. May be involved in the regulation of proximal tubular Na(+)-dependent inorganic phosphate cotransport therefore playing an important role in tubule function. The protein is Na(+)/H(+) exchange regulatory cofactor NHE-RF3 (PDZK1) of Homo sapiens (Human).